Reading from the N-terminus, the 362-residue chain is MTPTPDAQAARELIRQAVSIPSLSGEEQAIAAFLRDWMARRGFDAQVDEAGNAVGVRGSGPLTVALLGHMDTVPGDIPVRVDEAGVLHGRGSVDAKGSLCTFIAAVSALPPEALSAARFVCIGATEEEAPSSKGARYAMRQHRPDFVLIGEPSGWAGLTLGYKGRLVAKVRVEKDNFHTAGDGTSAADDLTLGWQRVREWAAGFAPADSGGGGIFDRVQVTLQDLGSSGDGLTQRAWATIGLRLPPALAPYQAEEAIEQAFAGLGADLTFTGHESAVRHPKDNALTRALRVAIREQGGTPTFKVKTGTSDMNVVAELWPVPTLAYGPGDSALDHTPEERLDLAEYDRAVAVLTSALTRLVGG.

Histidine 69 contributes to the Zn(2+) binding site. Residue aspartate 71 is part of the active site. Aspartate 94 lines the Zn(2+) pocket. Glutamate 127 functions as the Proton acceptor in the catalytic mechanism. Glutamate 128, glutamate 151, and histidine 334 together coordinate Zn(2+).

Belongs to the peptidase M20A family. LysK subfamily. Zn(2+) serves as cofactor. The cofactor is Co(2+).

The protein localises to the cytoplasm. The enzyme catalyses [amino-group carrier protein]-C-terminal-gamma-(L-lysyl)-L-glutamate + H2O = [amino-group carrier protein]-C-terminal-L-glutamate + L-lysine. The protein operates within amino-acid biosynthesis; L-lysine biosynthesis via AAA pathway; L-lysine from L-alpha-aminoadipate (Thermus route): step 5/5. Functionally, catalyzes the release of L-lysine from [LysW]-gamma-L-lysine. The protein is [LysW]-lysine hydrolase of Deinococcus radiodurans (strain ATCC 13939 / DSM 20539 / JCM 16871 / CCUG 27074 / LMG 4051 / NBRC 15346 / NCIMB 9279 / VKM B-1422 / R1).